Consider the following 382-residue polypeptide: D-galactonate dehydratase (382 aa).

D183 is a binding site for Mg(2+). Residue H185 is the Proton donor of the active site. Mg(2+)-binding residues include E209 and E235. H285 acts as the Proton acceptor in catalysis. The disordered stretch occupies residues 361–382; that stretch reads NENPPDWRNPVWRHSDGSIAEW.

The protein belongs to the mandelate racemase/muconate lactonizing enzyme family. GalD subfamily. The cofactor is Mg(2+).

The enzyme catalyses D-galactonate = 2-dehydro-3-deoxy-D-galactonate + H2O. Its pathway is carbohydrate acid metabolism; D-galactonate degradation; D-glyceraldehyde 3-phosphate and pyruvate from D-galactonate: step 1/3. Catalyzes the dehydration of D-galactonate to 2-keto-3-deoxy-D-galactonate. In Xanthomonas axonopodis pv. citri (strain 306), this protein is D-galactonate dehydratase.